Reading from the N-terminus, the 357-residue chain is MGIMEAERKTTGWAARDPSGILSPYTYTLRETGPEDVNIRIICCGICHTDLHQTKNDLGMSNYPMVPGHEVVGEVVEVGSDVSKFTVGDIVGVGCLVGCCGGCSPCERDLEQYCPKKIWSYNDVYINGQPTQGGFAKATVVHQKFVVKIPEGMAVEQAAPLLCAGVTVYSPLSHFGLKQPGLRGGILGLGGVGHMGVKIAKAMGHHVTVISSSNKKREEALQDLGADDYVIGSDQAKMSELADSLDYVIDTVPVHHALEPYLSLLKLDGKLILMGVINNPLQFLTPLLMLGRKVITGSFIGSMKETEEMLEFCKEKGLSSIIEVVKMDYVNTAFERLEKNDVRYRFVVDVEGSNLDA.

Residue Cys47 participates in Zn(2+) binding. Residue Thr49 participates in NADP(+) binding. Zn(2+) contacts are provided by His69, Glu70, Cys100, Cys103, Cys106, Cys114, and Cys163. NADP(+) is bound by residues Thr167, 188–193 (GLGGVG), 211–216 (SSSNKK), Thr251, Gly275, and 298–300 (SFI).

This sequence belongs to the zinc-containing alcohol dehydrogenase family. Homodimer. It depends on Zn(2+) as a cofactor. As to expression, expressed at the lateral root initiation sites, in the vascular tissues of the primary lateral root and the root caps. Expressed in the hypocotyl, cotyledon and leaf veins, apical meristem region, at the base of the trichomes, hydathodes and cauline leaves. In stems, expressed in the cells associated with the vascular cambium, interfascicular cambium and the developing xylem. Expressed in the vascular strand of petals and sepals, anthers, stamen filaments, stigma in flowers, and abscission, style and stigmatic regions of siliques.

The enzyme catalyses (E)-cinnamyl alcohol + NADP(+) = (E)-cinnamaldehyde + NADPH + H(+). The catalysed reaction is (E)-coniferol + NADP(+) = (E)-coniferaldehyde + NADPH + H(+). It carries out the reaction (E)-sinapyl alcohol + NADP(+) = (E)-sinapaldehyde + NADPH + H(+). It catalyses the reaction (E)-4-coumaroyl alcohol + NADP(+) = (E)-4-coumaraldehyde + NADPH + H(+). The enzyme catalyses (E)-caffeyl alcohol + NADP(+) = (E)-caffeyl aldehyde + NADPH + H(+). The protein operates within aromatic compound metabolism; phenylpropanoid biosynthesis. Functionally, involved in lignin biosynthesis in the floral stem. Catalyzes the final step specific for the production of lignin monomers. Catalyzes the NADPH-dependent reduction of coniferaldehyde, 5-hydroxyconiferaldehyde, sinapaldehyde, 4-coumaraldehyde and caffeyl aldehyde to their respective alcohols. The protein is Cinnamyl alcohol dehydrogenase 5 of Arabidopsis thaliana (Mouse-ear cress).